The primary structure comprises 216 residues: Protein-L-isoaspartate O-methyltransferase (216 aa).

The active site involves S60.

Belongs to the methyltransferase superfamily. L-isoaspartyl/D-aspartyl protein methyltransferase family.

Its subcellular location is the cytoplasm. It carries out the reaction [protein]-L-isoaspartate + S-adenosyl-L-methionine = [protein]-L-isoaspartate alpha-methyl ester + S-adenosyl-L-homocysteine. Catalyzes the methyl esterification of L-isoaspartyl residues in peptides and proteins that result from spontaneous decomposition of normal L-aspartyl and L-asparaginyl residues. It plays a role in the repair and/or degradation of damaged proteins. The sequence is that of Protein-L-isoaspartate O-methyltransferase from Methanococcus aeolicus (strain ATCC BAA-1280 / DSM 17508 / OCM 812 / Nankai-3).